Consider the following 339-residue polypeptide: F-box protein At3g22700 (339 aa).

Positions 1–49 (MMSNLPLDLVEEILSRVPATSLKRLRSTCRQWNALLKDRRFTEKHFRKA) constitute an F-box domain.

In Arabidopsis thaliana (Mouse-ear cress), this protein is F-box protein At3g22700.